A 509-amino-acid polypeptide reads, in one-letter code: Cytochrome P450 monooxygenase LUC2 (509 aa).

A helical membrane pass occupies residues 30-50 (TKVLVTFLTIVIIAPRVFTVI). Heme is bound at residue Cys-456.

It belongs to the cytochrome P450 family. Heme serves as cofactor.

It localises to the membrane. The protein operates within mycotoxin biosynthesis. Functionally, cytochrome P450 monooxygenase; part of the gene cluster that mediates the biosynthesis of the mycotoxin lucilactaene and the lucilactaene-related compound NG-391 that act as cell cycle inhibitors with potent growth inhibitory activity against malarial parasites, moderate growth inhibitory activity against cancer cells, and no activity against bacteria and fungi. Within the pathway, LUC2 performs C-20 methyl group hydroxylation of several intermediates. LUC2 does not perform the full oxidation of the C-20 methyl group into carboxylic acid, which is a prerequisite for the final methylation step. The pathway begins with the hybrid PKS-NRPS synthetase LUC5 which is responsible for the condensation of one acetyl-coenzyme A (CoA) unit with six malonyl-CoA units and the amide linkage of the arising heptaketide and homoserine, subsequently releasing the first intermediate prelucilactaene B. Both the cytochrome P450 monooxygenase LUC2 and the hydrolase LUC6 function in parallel in modification of prelucilactaene B. LUC6 may catalyze the 2-pyrrolidone ring formation to form prelucilactaene C from prelucilactaene B, followed by C-15 hydroxylation by the same enzyme to give prelucilactaene D, which is then converted to prelucilactaene E by epoxidation, and finally to prelucilactaene F by cyclization. Prelucilactane D, prelucilactaene E, and prelucilactaene F can be converted to dihydrolucilactaene, NG391, and lucilactaene, respectively, via C-20 methyl group hydroxylation by the cytochrome P450 monooxygenase LUC2. However, LUC2, unlike FUS8 in fusarin C biosynthesis, is not enough for the full oxidation of the C-20 methyl group into carboxylic acid, which is a prerequisite for the final methylation step. The aldehyde dehydrogenase LUC3 is involved in the biosynthesis by further oxidation of the C-20 alcoholic analog prelucilactaene G into a carboxylic derivative. This unidentified carboxylic derivative may be converted to demethyllucilactaene. As the last step, the methyltransferase LUC1 methylates the hydroxyl group at C-21 of demethyllucilactaene to generate lucilactaene. This chain is Cytochrome P450 monooxygenase LUC2, found in Fusarium sp.